The primary structure comprises 206 residues: Large ribosomal subunit protein uL4 (206 aa).

Positions 43-78 (ARSGNRKQKDREEVKHTTKKPWRQKGTGRARAGMSS) are disordered. Positions 49–58 (KQKDREEVKH) are enriched in basic and acidic residues. Over residues 59-70 (TTKKPWRQKGTG) the composition is skewed to basic residues.

The protein belongs to the universal ribosomal protein uL4 family. As to quaternary structure, part of the 50S ribosomal subunit.

Functionally, one of the primary rRNA binding proteins, this protein initially binds near the 5'-end of the 23S rRNA. It is important during the early stages of 50S assembly. It makes multiple contacts with different domains of the 23S rRNA in the assembled 50S subunit and ribosome. In terms of biological role, forms part of the polypeptide exit tunnel. This chain is Large ribosomal subunit protein uL4, found in Cupriavidus metallidurans (strain ATCC 43123 / DSM 2839 / NBRC 102507 / CH34) (Ralstonia metallidurans).